A 109-amino-acid polypeptide reads, in one-letter code: MAMKIRCNDQIIVLTGKDKGKRTKIKKILKNGKVILEGVNLVKKHQKPVPAQNQPGGIIEKEAPIDFSNVAIFNEDTGKADRIGFKYENGKKVRFFKSSGKAIAKINKS.

This sequence belongs to the universal ribosomal protein uL24 family. As to quaternary structure, part of the 50S ribosomal subunit.

Its function is as follows. One of two assembly initiator proteins, it binds directly to the 5'-end of the 23S rRNA, where it nucleates assembly of the 50S subunit. In terms of biological role, one of the proteins that surrounds the polypeptide exit tunnel on the outside of the subunit. In Hamiltonella defensa subsp. Acyrthosiphon pisum (strain 5AT), this protein is Large ribosomal subunit protein uL24.